The chain runs to 554 residues: Phenylalanine--tRNA ligase beta subunit (554 aa).

Positions 274 to 351 (LTPDSAEITI…INYGYENFNG (78 aa)) constitute a B5 domain. Mg(2+)-binding residues include D329, D335, and D339.

It belongs to the phenylalanyl-tRNA synthetase beta subunit family. Type 2 subfamily. Tetramer of two alpha and two beta subunits. Mg(2+) is required as a cofactor.

The protein resides in the cytoplasm. It catalyses the reaction tRNA(Phe) + L-phenylalanine + ATP = L-phenylalanyl-tRNA(Phe) + AMP + diphosphate + H(+). The polypeptide is Phenylalanine--tRNA ligase beta subunit (Methanococcus aeolicus (strain ATCC BAA-1280 / DSM 17508 / OCM 812 / Nankai-3)).